Here is a 392-residue protein sequence, read N- to C-terminus: Chorismate synthase (392 aa).

NADP(+)-binding residues include Arg39 and Arg45. Residues 131 to 133 (RSS), 255 to 256 (NA), Gly300, 315 to 319 (KPIPT), and Arg341 each bind FMN.

It belongs to the chorismate synthase family. In terms of assembly, homotetramer. The cofactor is FMNH2.

It carries out the reaction 5-O-(1-carboxyvinyl)-3-phosphoshikimate = chorismate + phosphate. Its pathway is metabolic intermediate biosynthesis; chorismate biosynthesis; chorismate from D-erythrose 4-phosphate and phosphoenolpyruvate: step 7/7. Catalyzes the anti-1,4-elimination of the C-3 phosphate and the C-6 proR hydrogen from 5-enolpyruvylshikimate-3-phosphate (EPSP) to yield chorismate, which is the branch point compound that serves as the starting substrate for the three terminal pathways of aromatic amino acid biosynthesis. This reaction introduces a second double bond into the aromatic ring system. This Leuconostoc citreum (strain KM20) protein is Chorismate synthase.